The chain runs to 296 residues: N-acetylmuramic acid 6-phosphate etherase 2 (296 aa).

An SIS domain is found at 55-218 (IIKSFNQGGR…STISMIGIGK (164 aa)). E83 acts as the Proton donor in catalysis. E114 is a catalytic residue.

Belongs to the GCKR-like family. MurNAc-6-P etherase subfamily. Homodimer.

The enzyme catalyses N-acetyl-D-muramate 6-phosphate + H2O = N-acetyl-D-glucosamine 6-phosphate + (R)-lactate. It participates in amino-sugar metabolism; N-acetylmuramate degradation. Its function is as follows. Specifically catalyzes the cleavage of the D-lactyl ether substituent of MurNAc 6-phosphate, producing GlcNAc 6-phosphate and D-lactate. In Enterococcus faecalis (strain ATCC 700802 / V583), this protein is N-acetylmuramic acid 6-phosphate etherase 2.